A 425-amino-acid chain; its full sequence is RNA polymerase sigma factor SigA (425 aa).

The segment at 193 to 263 is sigma-70 factor domain-2; that stretch reads MVQSNLRLVV…TRAIADQSRT (71 aa). An Interaction with polymerase core subunit RpoC motif is present at residues 217 to 220; the sequence is DLIQ. Positions 272 to 347 are sigma-70 factor domain-3; that stretch reads ETISRIKKTT…EADGETPEDE (76 aa). The tract at residues 360–413 is sigma-70 factor domain-4; it reads VLDTLSPRERDVLRLRYGLDDGRMKTLEEIGQIFNVTRERIRQIEAKALRKLRH. The segment at residues 386–405 is a DNA-binding region (H-T-H motif); it reads LEEIGQIFNVTRERIRQIEA.

It belongs to the sigma-70 factor family. RpoD/SigA subfamily. In terms of assembly, interacts transiently with the RNA polymerase catalytic core.

The protein localises to the cytoplasm. In terms of biological role, sigma factors are initiation factors that promote the attachment of RNA polymerase to specific initiation sites and are then released. This sigma factor is the primary sigma factor during exponential growth. In Synechocystis sp. (strain ATCC 27184 / PCC 6803 / Kazusa), this protein is RNA polymerase sigma factor SigA.